Here is a 317-residue protein sequence, read N- to C-terminus: Beta-ketoacyl-[acyl-carrier-protein] synthase III (317 aa).

Catalysis depends on residues Cys112 and His244. The ACP-binding stretch occupies residues 245–249; the sequence is QANVR. The active site involves Asn274.

Belongs to the thiolase-like superfamily. FabH family. Homodimer.

The protein localises to the cytoplasm. It catalyses the reaction malonyl-[ACP] + acetyl-CoA + H(+) = 3-oxobutanoyl-[ACP] + CO2 + CoA. The protein operates within lipid metabolism; fatty acid biosynthesis. Functionally, catalyzes the condensation reaction of fatty acid synthesis by the addition to an acyl acceptor of two carbons from malonyl-ACP. Catalyzes the first condensation reaction which initiates fatty acid synthesis and may therefore play a role in governing the total rate of fatty acid production. Possesses both acetoacetyl-ACP synthase and acetyl transacylase activities. Its substrate specificity determines the biosynthesis of branched-chain and/or straight-chain of fatty acids. This chain is Beta-ketoacyl-[acyl-carrier-protein] synthase III, found in Rickettsia bellii (strain OSU 85-389).